The following is a 1194-amino-acid chain: Pre-mRNA-processing ATP-dependent RNA helicase prp-5 (1194 aa).

Disordered regions lie at residues 1–201 (MARL…KEAK), 224–248 (AVVG…ASPA), and 452–484 (ASGE…DDYG). Composition is skewed to basic and acidic residues over residues 21–37 (RKDD…GPVD) and 44–154 (SPID…RDQP). Positions 156–176 (PGNTTAKENEPAKSTPTQPQT) are enriched in polar residues. The segment covering 177-186 (EAEKKAERLR) has biased composition (basic and acidic residues). Low complexity predominate over residues 232–248 (SPAPASPAAAESPASPA). Residues 455-469 (EESHSKADTLTEKKN) show a composition bias toward basic and acidic residues. A Q motif motif is present at residues 561–589 (QKWSQCGLTRPILDTIESLGFEKPTPIQM). The region spanning 592–770 (LPVIMSGRDV…KKVLRDPVEI (179 aa)) is the Helicase ATP-binding domain. 605 to 612 (AKTGSGKT) provides a ligand contact to ATP. The short motif at 718–721 (DEAD) is the DEAD box element. The region spanning 797–945 (RLLELLGELY…PVPDRLNEMR (149 aa)) is the Helicase C-terminal domain. Disordered stretches follow at residues 952-1011 (VKAG…DKTK) and 1025-1056 (DASK…SGGA). Composition is skewed to basic and acidic residues over residues 967 to 980 (GLEK…AARM), 997 to 1011 (EDAP…DKTK), and 1025 to 1036 (DASKAETEDKHA).

This sequence belongs to the DEAD box helicase family. DDX46/PRP5 subfamily.

The protein localises to the nucleus. The enzyme catalyses ATP + H2O = ADP + phosphate + H(+). In terms of biological role, ATP-dependent RNA helicase involved spliceosome assembly and in nuclear splicing. Catalyzes an ATP-dependent conformational change of U2 snRNP. Bridges U1 and U2 snRNPs and enables stable U2 snRNP association with intron RNA. This Neurospora crassa (strain ATCC 24698 / 74-OR23-1A / CBS 708.71 / DSM 1257 / FGSC 987) protein is Pre-mRNA-processing ATP-dependent RNA helicase prp-5 (prp-5).